We begin with the raw amino-acid sequence, 175 residues long: Protein ppBat (175 aa).

Residues Cys-74 and Cys-111 each contribute to the Zn(2+) site. Positions 161 and 164 each coordinate riboflavin.

In terms of assembly, homodimer.

Its function is as follows. Binds flavin derivatives, such as lumichrome, riboflavin, FMN, and FAD. May act as a flavin storage protein. Appears to lack proteolytic or chaperone activities. The polypeptide is Protein ppBat (Bacteroides thetaiotaomicron (strain ATCC 29148 / DSM 2079 / JCM 5827 / CCUG 10774 / NCTC 10582 / VPI-5482 / E50)).